The chain runs to 246 residues: UL16-binding protein 2 (246 aa).

A signal peptide spans 1–25 (MAAAAATKILLCLPLLLLLSGWSRA). The MHC class I alpha-1 like stretch occupies residues 29-117 (DPHSLCYDIT…IQLENYTPKE (89 aa)). An intrachain disulfide couples Cys50 to Cys66. Residues Asn68 and Asn82 are each glycosylated (N-linked (GlcNAc...) asparagine). An MHC class I alpha-2 like region spans residues 118-210 (PLTLQARMSC…MDSTLEPSAG (93 aa)). Cysteines 127 and 190 form a disulfide. An a protein-binding site is contributed by Ser216. Ser217 is lipidated: GPI-anchor amidated serine. A propeptide spans 218–246 (GTTQLRATATTLILCCLLIILPCFILPGI) (removed in mature form).

It belongs to the MHC class I family. In terms of assembly, interacts with KLRK1/NKG2D. Does not bind to beta2-microglobulin. (Microbial infection) In CMV-infected cells, interacts with the viral glycoprotein UL16; this interaction causes ULBP2 retention in the endoplasmic reticulum and cis-Golgi and prevents binding to and activation of KLRK1/NKG2D, providing CMV with an immune evasion mechanism. Expressed in various types of cancer cell lines and in the fetus, but not in normal tissues.

The protein resides in the cell membrane. The protein localises to the endoplasmic reticulum. It is found in the secreted. Its function is as follows. Binds and activates the KLRK1/NKG2D receptor, mediating natural killer cell cytotoxicity. The protein is UL16-binding protein 2 of Homo sapiens (Human).